Here is a 251-residue protein sequence, read N- to C-terminus: Flagellar brake protein YcgR (251 aa).

A PilZ domain is found at 127–239; the sequence is QRRDGFRVRP…ASRTLQRYID (113 aa).

It belongs to the YcgR family. In terms of assembly, monomer. Interacts with the flagellar basal bodies.

It is found in the bacterial flagellum basal body. Acts as a flagellar brake, regulating swimming and swarming in a bis-(3'-5') cyclic diguanylic acid (c-di-GMP)-dependent manner. Binds 1 c-di-GMP dimer per subunit. Increasing levels of c-di-GMP lead to decreased motility. This chain is Flagellar brake protein YcgR, found in Leptothrix cholodnii (strain ATCC 51168 / LMG 8142 / SP-6) (Leptothrix discophora (strain SP-6)).